Here is a 317-residue protein sequence, read N- to C-terminus: tRNA N6-adenosine threonylcarbamoyltransferase (317 aa).

The Fe cation site is built by H110 and H114. Substrate is bound by residues 132 to 136, D165, G178, D182, and N271; that span reads VVSGG. Fe cation is bound at residue D300.

Belongs to the KAE1 / TsaD family. Fe(2+) is required as a cofactor.

It localises to the cytoplasm. It carries out the reaction L-threonylcarbamoyladenylate + adenosine(37) in tRNA = N(6)-L-threonylcarbamoyladenosine(37) in tRNA + AMP + H(+). In terms of biological role, required for the formation of a threonylcarbamoyl group on adenosine at position 37 (t(6)A37) in tRNAs that read codons beginning with adenine. Is involved in the transfer of the threonylcarbamoyl moiety of threonylcarbamoyl-AMP (TC-AMP) to the N6 group of A37, together with TsaE and TsaB. TsaD likely plays a direct catalytic role in this reaction. This chain is tRNA N6-adenosine threonylcarbamoyltransferase, found in Mesoplasma florum (strain ATCC 33453 / NBRC 100688 / NCTC 11704 / L1) (Acholeplasma florum).